A 415-amino-acid polypeptide reads, in one-letter code: Gamma-glutamyl phosphate reductase (415 aa).

It belongs to the gamma-glutamyl phosphate reductase family.

Its subcellular location is the cytoplasm. The enzyme catalyses L-glutamate 5-semialdehyde + phosphate + NADP(+) = L-glutamyl 5-phosphate + NADPH + H(+). It functions in the pathway amino-acid biosynthesis; L-proline biosynthesis; L-glutamate 5-semialdehyde from L-glutamate: step 2/2. Catalyzes the NADPH-dependent reduction of L-glutamate 5-phosphate into L-glutamate 5-semialdehyde and phosphate. The product spontaneously undergoes cyclization to form 1-pyrroline-5-carboxylate. The chain is Gamma-glutamyl phosphate reductase from Mycobacterium sp. (strain JLS).